Here is a 457-residue protein sequence, read N- to C-terminus: Bifunctional protein GlmU (457 aa).

The interval 1-228 (MEELVSVILA…SEEIIGVNSR (228 aa)) is pyrophosphorylase. UDP-N-acetyl-alpha-D-glucosamine is bound by residues 9-12 (LAAG), lysine 23, glutamine 73, and 78-79 (GT). Position 102 (aspartate 102) interacts with Mg(2+). The UDP-N-acetyl-alpha-D-glucosamine site is built by glycine 139, glutamate 154, asparagine 169, and asparagine 226. Residue asparagine 226 participates in Mg(2+) binding. A linker region spans residues 229-249 (VQLSNAEKVMRRRINEKHMEN). The interval 250–457 (GVTIIDPDST…VEERIKKGRL (208 aa)) is N-acetyltransferase. The UDP-N-acetyl-alpha-D-glucosamine site is built by arginine 331 and lysine 349. Histidine 361 serves as the catalytic Proton acceptor. UDP-N-acetyl-alpha-D-glucosamine is bound by residues tyrosine 364 and asparagine 375. Residues 384-385 (NY), alanine 421, and arginine 438 contribute to the acetyl-CoA site.

In the N-terminal section; belongs to the N-acetylglucosamine-1-phosphate uridyltransferase family. It in the C-terminal section; belongs to the transferase hexapeptide repeat family. In terms of assembly, homotrimer. The cofactor is Mg(2+).

The protein localises to the cytoplasm. It carries out the reaction alpha-D-glucosamine 1-phosphate + acetyl-CoA = N-acetyl-alpha-D-glucosamine 1-phosphate + CoA + H(+). It catalyses the reaction N-acetyl-alpha-D-glucosamine 1-phosphate + UTP + H(+) = UDP-N-acetyl-alpha-D-glucosamine + diphosphate. Its pathway is nucleotide-sugar biosynthesis; UDP-N-acetyl-alpha-D-glucosamine biosynthesis; N-acetyl-alpha-D-glucosamine 1-phosphate from alpha-D-glucosamine 6-phosphate (route II): step 2/2. It functions in the pathway nucleotide-sugar biosynthesis; UDP-N-acetyl-alpha-D-glucosamine biosynthesis; UDP-N-acetyl-alpha-D-glucosamine from N-acetyl-alpha-D-glucosamine 1-phosphate: step 1/1. It participates in bacterial outer membrane biogenesis; LPS lipid A biosynthesis. Its function is as follows. Catalyzes the last two sequential reactions in the de novo biosynthetic pathway for UDP-N-acetylglucosamine (UDP-GlcNAc). The C-terminal domain catalyzes the transfer of acetyl group from acetyl coenzyme A to glucosamine-1-phosphate (GlcN-1-P) to produce N-acetylglucosamine-1-phosphate (GlcNAc-1-P), which is converted into UDP-GlcNAc by the transfer of uridine 5-monophosphate (from uridine 5-triphosphate), a reaction catalyzed by the N-terminal domain. The sequence is that of Bifunctional protein GlmU from Caldanaerobacter subterraneus subsp. tengcongensis (strain DSM 15242 / JCM 11007 / NBRC 100824 / MB4) (Thermoanaerobacter tengcongensis).